A 140-amino-acid polypeptide reads, in one-letter code: Large ribosomal subunit protein uL15 (140 aa).

Positions 1–31 (MDTKKFRGSRTCGGGTHKNRRGAGNRGGRGK) are disordered.

This sequence belongs to the universal ribosomal protein uL15 family. In terms of assembly, part of the 50S ribosomal subunit.

Its function is as follows. Binds to the 23S rRNA. The protein is Large ribosomal subunit protein uL15 of Methanosarcina barkeri (strain Fusaro / DSM 804).